We begin with the raw amino-acid sequence, 123 residues long: UPF0738 protein BALH_1059 (123 aa).

This sequence belongs to the UPF0738 family.

The polypeptide is UPF0738 protein BALH_1059 (Bacillus thuringiensis (strain Al Hakam)).